The primary structure comprises 250 residues: Endonuclease NucS 2 (250 aa).

It belongs to the NucS endonuclease family.

It is found in the cytoplasm. Functionally, cleaves both 3' and 5' ssDNA extremities of branched DNA structures. The chain is Endonuclease NucS 2 from Halobacterium salinarum (strain ATCC 700922 / JCM 11081 / NRC-1) (Halobacterium halobium).